Consider the following 281-residue polypeptide: Insulin-like growth factor-binding protein 7 (281 aa).

A signal peptide spans 1–25 (MERPPRALLLGAAGLLLLLLPLSSS). An IGFBP N-terminal domain is found at 27 to 113 (SSDACGPCVP…PATLAVCVCK (87 aa)). Cystine bridges form between cysteine 31/cysteine 56, cysteine 34/cysteine 58, cysteine 39/cysteine 59, cysteine 47/cysteine 62, cysteine 70/cysteine 86, cysteine 80/cysteine 110, cysteine 112/cysteine 130, and cysteine 119/cysteine 155. A Kazal-like domain is found at 98–157 (GAAAGGPATLAVCVCKSRYPVCGSNGITYPSGCQLRAASLRAESRGEKAITQVSKGTCEQ). Residues 159–263 (PSIVTPPKDI…GQASAAAKIT (105 aa)) enclose the Ig-like C2-type domain. Asparagine 170 carries an N-linked (GlcNAc...) asparagine glycan. Cysteine 180 and cysteine 247 are oxidised to a cystine. Phosphoserine is present on serine 238.

In terms of assembly, may interact with VPS24/CHMP3; the relevance of such interaction however remains unclear. Interacts with CD93; this interaction plays a role in endothelial cells angiogenesis. In terms of processing, N-glycosylated. Expressed at high levels in lung, kidney, small intestine, testis and uterus and at moderate levels in liver.

The protein localises to the secreted. Binds IGF1 and IGF2 with a relatively low affinity. Stimulates prostacyclin (PGI2) production. Stimulates cell adhesion. Acts as a ligand for CD93 to play a role in angiogenesis. The sequence is that of Insulin-like growth factor-binding protein 7 (Igfbp7) from Mus musculus (Mouse).